Here is a 168-residue protein sequence, read N- to C-terminus: MGDPKKPRKKWEGPRHPWRKEVLVQELKLLGTYGLRNKRELWRAQTIVRKFRHQARSLLAAPQEIREQAEKALLNRLYRLGLLHENASLEDVLGLTVEDLLERRLQTIVYKKGLARTIYHARQLIIHGHIAIAGRRITSPGYIVSREEEDLVDYAPTSPFKKSIEEKA.

The 65-residue stretch at 103-167 (RRLQTIVYKK…SPFKKSIEEK (65 aa)) folds into the S4 RNA-binding domain.

The protein belongs to the universal ribosomal protein uS4 family. As to quaternary structure, part of the 30S ribosomal subunit. Contacts protein S5. The interaction surface between S4 and S5 is involved in control of translational fidelity.

In terms of biological role, one of the primary rRNA binding proteins, it binds directly to 16S rRNA where it nucleates assembly of the body of the 30S subunit. Functionally, with S5 and S12 plays an important role in translational accuracy. This chain is Small ribosomal subunit protein uS4, found in Staphylothermus marinus (strain ATCC 43588 / DSM 3639 / JCM 9404 / F1).